The sequence spans 285 residues: 4,4'-diapophytoene synthase (285 aa).

Residues 18-21, Tyr-41, and Arg-45 contribute to the (2E,6E)-farnesyl diphosphate site; that span reads YSKS. Mg(2+)-binding residues include Asp-48 and Asp-52. Gln-163 contacts (2E,6E)-farnesyl diphosphate. Mg(2+) is bound at residue Asn-166. Arg-169 is a binding site for (2E,6E)-farnesyl diphosphate. Asp-170 contacts Mg(2+). Tyr-247 is a (2E,6E)-farnesyl diphosphate binding site.

It belongs to the phytoene/squalene synthase family. CrtM subfamily. Requires Mg(2+) as cofactor.

It carries out the reaction 2 (2E,6E)-farnesyl diphosphate = 15-cis-4,4'-diapophytoene + 2 diphosphate. It functions in the pathway carotenoid biosynthesis; staphyloxanthin biosynthesis; staphyloxanthin from farnesyl diphosphate: step 1/5. Functionally, involved in the biosynthesis of the yellow-orange carotenoid staphyloxanthin, which plays a role in the virulence via its protective function against oxidative stress. Catalyzes the head-to-head condensation of two molecules of farnesyl diphosphate (FPP) into the colorless C(30) carotenoid 4,4'-diapophytoene (dehydrosqualene). This is 4,4'-diapophytoene synthase (crtM) from Staphylococcus haemolyticus (strain JCSC1435).